The chain runs to 1318 residues: Serine/threonine-protein kinase ppk18 (1318 aa).

The tract at residues 431–485 is disordered; that stretch reads PSVSPEEVHDISQFNHRNDPPITAASVDSSNSFSVHRSSTNHSSTNSGSPNLSRR. The segment covering 462-479 has biased composition (low complexity); sequence SFSVHRSSTNHSSTNSGS. The region spanning 566–934 is the Protein kinase domain; sequence YEIIKPISKG…INEIKEHPFF (369 aa). ATP contacts are provided by residues 572-580 and lysine 595; that span reads ISKGTFGTV. Catalysis depends on aspartate 690, which acts as the Proton acceptor. The 110-residue stretch at 935–1044 folds into the AGC-kinase C-terminal domain; sequence NGINWDDIFS…KNLSVLERAN (110 aa). 3 disordered regions span residues 968 to 1022, 1058 to 1078, and 1091 to 1127; these read GAAE…FSEA, KLHISPPDPHIGYTPGSDMPS, and SLMTNQGSNFSSTDSTPRKSINSSDVESRSKTDGPKS. The span at 972–1000 shows a compositional bias: polar residues; that stretch reads SNMSSSVNSGEEVSKDNNVSQERGSQFLR. Residues 1091–1115 show a composition bias toward polar residues; that stretch reads SLMTNQGSNFSSTDSTPRKSINSSD. Residues 1116-1127 are compositionally biased toward basic and acidic residues; it reads VESRSKTDGPKS. The Response regulatory domain maps to 1200–1316; the sequence is KALICVSKLN…LLRGYIARLC (117 aa).

This sequence belongs to the protein kinase superfamily. Ser/Thr protein kinase family.

Its subcellular location is the cytoplasm. It carries out the reaction L-seryl-[protein] + ATP = O-phospho-L-seryl-[protein] + ADP + H(+). The enzyme catalyses L-threonyl-[protein] + ATP = O-phospho-L-threonyl-[protein] + ADP + H(+). The protein is Serine/threonine-protein kinase ppk18 (ppk18) of Schizosaccharomyces pombe (strain 972 / ATCC 24843) (Fission yeast).